Consider the following 98-residue polypeptide: Keratin-associated protein 3-3 (98 aa).

3 repeat units span residues cysteine 3 to arginine 7, cysteine 47 to cysteine 51, and cysteine 89 to cysteine 93. The interval cysteine 3 to glutamine 59 is 3 X 5 AA repeats of C-C-X(3).

It belongs to the KRTAP type 3 family. As to quaternary structure, interacts with hair keratins. In terms of tissue distribution, localized to the upper cortex of the hair shaft.

Its function is as follows. In the hair cortex, hair keratin intermediate filaments are embedded in an interfilamentous matrix, consisting of hair keratin-associated proteins (KRTAP), which are essential for the formation of a rigid and resistant hair shaft through their extensive disulfide bond cross-linking with abundant cysteine residues of hair keratins. The matrix proteins include the high-sulfur and high-glycine-tyrosine keratins. The sequence is that of Keratin-associated protein 3-3 (KRTAP3-3) from Homo sapiens (Human).